The primary structure comprises 217 residues: Probable GTP-binding protein EngB (217 aa).

Residues 33-217 (GPTEIAFAGR…RAAIELAVAR (185 aa)) form the EngB-type G domain. GTP contacts are provided by residues 41 to 48 (GRSNVGKS), 68 to 72 (GRTQE), 95 to 98 (DMPG), 162 to 165 (TKTD), and 196 to 198 (TSS). Residues Ser-48 and Thr-70 each contribute to the Mg(2+) site.

The protein belongs to the TRAFAC class TrmE-Era-EngA-EngB-Septin-like GTPase superfamily. EngB GTPase family. Mg(2+) is required as a cofactor.

Functionally, necessary for normal cell division and for the maintenance of normal septation. The protein is Probable GTP-binding protein EngB of Sinorhizobium medicae (strain WSM419) (Ensifer medicae).